Here is a 351-residue protein sequence, read N- to C-terminus: MSGQKLTAANLVSAIDSLKKNVNYNYVNSSNTHTIQIVHVEKPEGPIKIKRGDTETSISKQAIWRLADALSTGEPVNVDRVFGASYNFRSALEALLAHTPEIYWCKLQRIQPGLNKSEVVEGHKHIIWLPDRPHEKGVMKEYETDVVISEIPSNNVVYDALSLPSTHSEIDIDVKRRHVQIQIALSAIGFQLGFRTWIARNDQGISYGDKKIADLDGIVQKIESEKLISSFDGAVQAAMNIDCIWFRNGKLMPAVMEVEHSTGVRSGLARMKQLKDLLPPYANTRWVIVAPDEDRDKVFKEANVPMFKNLDTQYFPYSAVEELYSLCIRRKLTNKAVNEEFLDCFMEKCVM.

It catalyses the reaction Endonucleolytic cleavage of DNA to give specific double-stranded fragments with terminal 5'-phosphates.. Its function is as follows. A P subtype restriction enzyme that recognizes the double-stranded sequence 5'-N(12)RCCGGYN(12)-3' and cleaves on both sides of the recognition sequence. This chain is Type II restriction enzyme NmeDI (nmeDIRP), found in Neisseria meningitidis serogroup C.